Here is a 434-residue protein sequence, read N- to C-terminus: Chaperone SurA (434 aa).

The N-terminal stretch at 1–22 (MKKWKSSLLGIAIWSLAASSMA) is a signal peptide. PpiC domains are found at residues 173-274 (TVQF…KVND) and 283-383 (VTEV…EVLD).

The protein localises to the periplasm. The catalysed reaction is [protein]-peptidylproline (omega=180) = [protein]-peptidylproline (omega=0). Its function is as follows. Chaperone involved in the correct folding and assembly of outer membrane proteins. Recognizes specific patterns of aromatic residues and the orientation of their side chains, which are found more frequently in integral outer membrane proteins. May act in both early periplasmic and late outer membrane-associated steps of protein maturation. The protein is Chaperone SurA of Photobacterium profundum (strain SS9).